The chain runs to 328 residues: E3 ubiquitin-protein ligase SINA-like 5 (328 aa).

Residues 1–77 form a disordered region; it reads MARSGGNDGH…GSPKSSQPVK (77 aa). Acidic residues-rich tracts occupy residues 10 to 20 and 27 to 62; these read HEEELDPELFE and GYED…ENVT. Residues 63 to 77 are compositionally biased toward polar residues; that stretch reads TDEQSGSPKSSQPVK. An RING-type; degenerate zinc finger spans residues 86 to 122; sequence CPTCCEPLKRPIYQCSNGHLACSSCCQKLNKKCSFCR. The tract at residues 136–324 is SBD; it reads VIEASIVPCP…MQICIAYGYK (189 aa). Residues 139–197 form an SIAH-type; degenerate zinc finger; that stretch reads ASIVPCPNAKHGCKETTTYCNQSSHEKVCKFVRCSCPVSNCNYVSSYSNLKSHACSTAH. Cys144, Cys151, His163, Cys167, Cys174, Cys179, His191, and His197 together coordinate Zn(2+).

It belongs to the SINA (Seven in absentia) family.

The catalysed reaction is S-ubiquitinyl-[E2 ubiquitin-conjugating enzyme]-L-cysteine + [acceptor protein]-L-lysine = [E2 ubiquitin-conjugating enzyme]-L-cysteine + N(6)-ubiquitinyl-[acceptor protein]-L-lysine.. Its pathway is protein modification; protein ubiquitination. Functionally, E3 ubiquitin-protein ligase that mediates ubiquitination and subsequent proteasomal degradation of target proteins. E3 ubiquitin ligases accept ubiquitin from an E2 ubiquitin-conjugating enzyme in the form of a thioester and then directly transfers the ubiquitin to targeted substrates. It probably triggers the ubiquitin-mediated degradation of different substrates. The chain is E3 ubiquitin-protein ligase SINA-like 5 from Arabidopsis thaliana (Mouse-ear cress).